The sequence spans 235 residues: Chalcone--flavanone isomerase 2 (235 aa).

Substrate contacts are provided by Thr50 and Ser192.

Belongs to the chalcone isomerase family.

The enzyme catalyses a chalcone = a flavanone.. It functions in the pathway secondary metabolite biosynthesis; flavonoid biosynthesis. Its function is as follows. Catalyzes the intramolecular cyclization of bicyclic chalcones into tricyclic (S)-flavanones. Responsible for the isomerization of 4,2',4',6'-tetrahydroxychalcone (also termed chalcone) into naringenin. This is Chalcone--flavanone isomerase 2 (CHI2) from Chrysanthemum morifolium (Florist's daisy).